A 470-amino-acid polypeptide reads, in one-letter code: 5-hydroxytryptamine receptor 2A (470 aa).

At 1–80 (MDILCEENTS…LQEKNWSALL (80 aa)) the chain is on the extracellular side. N-linked (GlcNAc...) asparagine glycosylation occurs at N38. Residues 81-97 (TAVVIILTIAGNILVIM) form a helical membrane-spanning segment. The Cytoplasmic segment spans residues 98–111 (AVSLEKKLQNATNY). The chain crosses the membrane as a helical span at residues 112-137 (FLMSLAIADMLLGFLVMPVSTLTILY). Residues 138–146 (GYRWPLPSK) lie on the Extracellular side of the membrane. The helical transmembrane segment at 147–171 (LCAVWIYLDVLFSTASIMHLCAISL) threads the bilayer. The cysteines at positions 148 and 227 are disulfide-linked. A serotonin-binding site is contributed by D155. Residues 172–174 (DRY) carry the DRY motif; important for ligand-induced conformation changes motif. Over 172–191 (DRYVAIQNPIHHSRFNSRTK) the chain is Cytoplasmic. A helical membrane pass occupies residues 192-215 (AFLKIIAVWTISVGISMPIPVFGL). The Extracellular segment spans residues 216-232 (QDDSKVFKEGSCLLADE). Residues 233–258 (NFVLIGSFVAFFIPLTIMVITYFLTI) traverse the membrane as a helical segment. The Cytoplasmic segment spans residues 259 to 321 (KSLQKEATLC…QSISNEQKAC (63 aa)). Residue S280 is modified to Phosphoserine. Residues 322-347 (KVLGIVFFLFVVMWCPFFITNIMAVI) form a helical membrane-spanning segment. N342 contacts serotonin. Cysteines 348 and 352 form a disulfide. Residues 348-355 (CKESCNRD) lie on the Extracellular side of the membrane. The chain crosses the membrane as a helical span at residues 356-381 (VIEALLNVFVWIGYLSSAVNPLVYTL). Positions 375-379 (NPLVY) match the NPxxY motif; important for ligand-induced conformation changes and signaling motif. At 382–470 (FNKTYRSAFS…NTVNEKVSCV (89 aa)) the chain is on the cytoplasmic side. The segment at 424–470 (QMGPKKNSKKDDKTTDNDCTMVALGKEHPEDAPADSSNTVNEKVSCV) is disordered. A compositionally biased stretch (polar residues) spans 458–470 (DSSNTVNEKVSCV). The short motif at 468-470 (SCV) is the PDZ-binding element.

This sequence belongs to the G-protein coupled receptor 1 family. In terms of assembly, interacts (via C-terminus) with MPDZ and PATJ. May interact (via C-terminus) with MPP3, PRDX6, DLG4, DLG1, CASK, APBA1 and MAGI2. Interacts with GRM2 and DRD2; this may affect signaling.

The protein resides in the cell membrane. Its subcellular location is the cell projection. The protein localises to the dendrite. It localises to the axon. It is found in the cytoplasmic vesicle. The protein resides in the membrane. Its subcellular location is the caveola. The protein localises to the presynapse. With respect to regulation, G-protein coupled receptor activity is regulated by lipids: oleamide increases HTR2A-mediated activity. Functionally, G-protein coupled receptor for 5-hydroxytryptamine (serotonin). Also functions as a receptor for various drugs and psychoactive substances, including mescaline, psilocybin, 1-(2,5-dimethoxy-4-iodophenyl)-2-aminopropane (DOI) and lysergic acid diethylamide (LSD). Ligand binding causes a conformation change that triggers signaling via guanine nucleotide-binding proteins (G proteins) and modulates the activity of downstream effectors. HTR2A is coupled to G(q)/G(11) G alpha proteins and activates phospholipase C-beta, releasing diacylglycerol (DAG) and inositol 1,4,5-trisphosphate (IP3) second messengers that modulate the activity of phosphatidylinositol 3-kinase and promote the release of Ca(2+) ions from intracellular stores, respectively. Beta-arrestin family members inhibit signaling via G proteins and mediate activation of alternative signaling pathways. Affects neural activity, perception, cognition and mood. Plays a role in the regulation of behavior, including responses to anxiogenic situations and psychoactive substances. Plays a role in intestinal smooth muscle contraction, and may play a role in arterial vasoconstriction. The chain is 5-hydroxytryptamine receptor 2A (HTR2A) from Bos taurus (Bovine).